Here is a 365-residue protein sequence, read N- to C-terminus: WAT1-related protein At1g01070 (365 aa).

10 helical membrane-spanning segments follow: residues 14 to 34 (YSPV…NALV), 46 to 66 (VIGA…AYVL), 83 to 103 (FVSG…GLSY), 107 to 127 (TVSC…ALIF), 139 to 159 (AGML…FLTF), 189 to 209 (WLLG…WMLF), 221 to 241 (YSST…LSLY), 255 to 275 (FVIT…TVAT), 285 to 305 (VFAS…DFLI), and 310 to 330 (LYLG…MFLW). The 131-residue stretch at 27-157 (MGSVNALVKK…LICISGALFL (131 aa)) folds into the EamA 1 domain. One can recognise an EamA 2 domain in the interval 223 to 329 (STCLMSIFAA…VTITGLYMFL (107 aa)). Residues 340–356 (TALSSGMDNEAQYTTPN) are compositionally biased toward polar residues. The interval 340–365 (TALSSGMDNEAQYTTPNKDNDSKSPV) is disordered.

The protein belongs to the drug/metabolite transporter (DMT) superfamily. Plant drug/metabolite exporter (P-DME) (TC 2.A.7.4) family.

Its subcellular location is the membrane. This chain is WAT1-related protein At1g01070, found in Arabidopsis thaliana (Mouse-ear cress).